Consider the following 283-residue polypeptide: MAEITASLVKELRERTGAGMMECKKALVEANGDIELAIENMRKSGAIKAAKKAGNVAADGVIKTKIEGNYGVILEVNCQTDFVAKDGGFQAFADKVLDAAFAGKITDVEALKAQFEEERVALVAKIGENINIRRIASLEGDVLASYLHGARIGVLVAAKNADEELVKQLAMHVAASKPEFVKPEDVSADVVEKEYQVQLDIAMQSGKPKEIAEKMVEGRMKKFTGEVSLTGQPFVMDPSKTVAQLLKEHNADVTNFIRFEVGEGIQKVETDFAAEVAAMSRQS.

An involved in Mg(2+) ion dislocation from EF-Tu region spans residues 80 to 83; that stretch reads TDFV.

It belongs to the EF-Ts family.

It is found in the cytoplasm. Its function is as follows. Associates with the EF-Tu.GDP complex and induces the exchange of GDP to GTP. It remains bound to the aminoacyl-tRNA.EF-Tu.GTP complex up to the GTP hydrolysis stage on the ribosome. This chain is Elongation factor Ts, found in Cronobacter sakazakii (strain ATCC BAA-894) (Enterobacter sakazakii).